We begin with the raw amino-acid sequence, 389 residues long: Inactive serine/threonine-protein kinase ZRK12 (389 aa).

One can recognise a Protein kinase domain in the interval 41-342; the sequence is SADEIRKATN…ETQFDSHQDI (302 aa). Residues 47–55 and lysine 84 contribute to the ATP site; that span reads KATNNFGVS. Tyrosine 129 carries the post-translational modification Phosphotyrosine. The residue at position 214 (threonine 214) is a Phosphothreonine. Residue tyrosine 222 is modified to Phosphotyrosine.

It belongs to the protein kinase superfamily. Ser/Thr protein kinase family.

Functionally, together with RPP13L4/ZAR1, involved in the regulation of the ambient temperature-sensitive intersection of growth and immune response in the absence of pathogens. This is Inactive serine/threonine-protein kinase ZRK12 from Arabidopsis thaliana (Mouse-ear cress).